The following is a 286-amino-acid chain: Ribonuclease Z (286 aa).

Residues His-61, His-63, Asp-65, His-66, His-153, Asp-176, and His-240 each coordinate Zn(2+). The active-site Proton acceptor is Asp-65.

Belongs to the RNase Z family. In terms of assembly, homodimer. The cofactor is Zn(2+).

It catalyses the reaction Endonucleolytic cleavage of RNA, removing extra 3' nucleotides from tRNA precursor, generating 3' termini of tRNAs. A 3'-hydroxy group is left at the tRNA terminus and a 5'-phosphoryl group is left at the trailer molecule.. In terms of biological role, zinc phosphodiesterase, which displays some tRNA 3'-processing endonuclease activity. Probably involved in tRNA maturation, by removing a 3'-trailer from precursor tRNA. This chain is Ribonuclease Z, found in Mycolicibacterium gilvum (strain PYR-GCK) (Mycobacterium gilvum (strain PYR-GCK)).